A 322-amino-acid chain; its full sequence is Putative membrane-bound redox modulator Alx (322 aa).

Residues 1–6 (MNTVGT) lie on the Periplasmic side of the membrane. A helical transmembrane segment spans residues 7–27 (PLLWGGFAVVVVIMLSIDLLL). Topologically, residues 28–43 (QGRRGAHAMSMKQAAG) are cytoplasmic. Residues 44–64 (WSILWVTLSLLFNAAFWWYLA) traverse the membrane as a helical segment. The Periplasmic portion of the chain corresponds to 65-89 (ETQGREVADPQALAFLTGYLIEKSL). The helical transmembrane segment at 90 to 110 (AVDNVFVWLMLFSYFSVPPAL) threads the bilayer. The Cytoplasmic portion of the chain corresponds to 111-113 (QRR). Residues 114-134 (VLVYGVLGAIVLRTIMIFAGT) traverse the membrane as a helical segment. Residue W135 is a topological domain, periplasmic. A helical membrane pass occupies residues 136 to 156 (LITQFEWLLYVFGAFLLFTGV). The Cytoplasmic portion of the chain corresponds to 157-198 (KMALAKEDESGIGEKPMVRWLRGHLRMTDTIENEHFFVRKNG). A helical transmembrane segment spans residues 199–219 (LLYATPLLLVLIMVEFSDVIF). Residues 220 to 225 (AVDSIP) are Periplasmic-facing. A helical transmembrane segment spans residues 226 to 246 (AIFAVTTDPFIVLTSNLFAIL). Residues 247-261 (GLRAMYFLLSGVAER) lie on the Cytoplasmic side of the membrane. A helical transmembrane segment spans residues 262-282 (FSMLKYGLAVILVFIGIKMLI). Topologically, residues 283 to 286 (VDFY) are periplasmic. Residues 287–307 (HIPIAISLGVVFGILTITLVI) traverse the membrane as a helical segment. Residues 308–321 (NTWVNHQRDKKLRA) are Cytoplasmic-facing.

The protein belongs to the TerC family.

It is found in the cell inner membrane. Its function is as follows. Has been proposed to be a redox modulator. In Salmonella typhi, this protein is Putative membrane-bound redox modulator Alx (alx).